A 270-amino-acid chain; its full sequence is Elongation factor Ts (270 aa).

Residues 75 to 78 (TDFV) are involved in Mg(2+) ion dislocation from EF-Tu.

The protein belongs to the EF-Ts family.

The protein resides in the cytoplasm. Associates with the EF-Tu.GDP complex and induces the exchange of GDP to GTP. It remains bound to the aminoacyl-tRNA.EF-Tu.GTP complex up to the GTP hydrolysis stage on the ribosome. The protein is Elongation factor Ts of Cutibacterium acnes (strain DSM 16379 / KPA171202) (Propionibacterium acnes).